Reading from the N-terminus, the 881-residue chain is MQDKYSPADVEKSAHDHWQATDAYKAVEHAKDKNGKDKKKFYACSMLPYPSGKLHMGHVRNYTINDVMYRYLRMNGYNVLMPMGWDAFGMPAENAAMANNVPPAQWTYANIEHMKTQMASMGLAIDWSREMTACKPEYYKWNQWMFLKMLEKGIIYKKTGSVNWDPIDQTVLANEQVIDGRGWRSGALIEKREIPMYYARITDYAEELLDHVEHKLPGWPERVRTMQANWIGKSTGVRFAFTHDIKDDDKLINDGKLWVFTTRADTIKGVTFCAVAAEHPLATFAAKSNPELAEFIAECKLGSVIEADMATMEKKGMPTGLFVKHPLTGSLVEVWVGNYVLITYGDGAVMGVPAHDERDFAFAQKYVLPIHQVIDVEGKTFSEVTWHDWYADKENGRCINSGKYDGLNYQQAVNTIAADLEELGLGEKKITYRLRDWGISRQRYWGTPIPMINCADCGAVPVPEKDLPVVLPEDCVPDGSGNPLNKHEAFLKCDCPKCGKPARRETDTMDTFVDSSWYYMRYCSPNSNDAMVDSRNDYWMPMDQYIGGIEHAVLHLLYARFWTKVMRDFGLVKFDEPFTNLLTQGMVLNETYYREDASGKKTWFNPADVQLELDDKGRPVSAILNNDRQPVEIGGTEKMSKSKNNGIDPQAQIDQYGADTARLFTMFASPPEQTLEWSGAGVEGANRFLRRVWTYAYNQSARIAAATASDFSKLSDAQKTLRREVHKILQQADNDYKRIQYNTVVSAGMKMLNTLEGAKLDESAASNAVIAEGLSIFLRILNPVAPHITHVLWQELGFAKVHGDILDAAWPQVDAGALEQAEIEMMIQVNGKLRGSIVVAKDADKATIEATALANEAVRKFIEGTPKKIIVVPGKLVNIVA.

Residues P48 to H58 carry the 'HIGH' region motif. Positions K638–S642 match the 'KMSKS' region motif. K641 is an ATP binding site.

It belongs to the class-I aminoacyl-tRNA synthetase family.

Its subcellular location is the cytoplasm. The enzyme catalyses tRNA(Leu) + L-leucine + ATP = L-leucyl-tRNA(Leu) + AMP + diphosphate. This Herminiimonas arsenicoxydans protein is Leucine--tRNA ligase.